A 218-amino-acid polypeptide reads, in one-letter code: ATP-dependent dethiobiotin synthetase BioD (218 aa).

9–15 (TNAGKTT) lines the ATP pocket. Threonine 14 lines the Mg(2+) pocket. Lysine 35 is an active-site residue. Lysine 35 is a phosphate binding site. Substrate is bound at residue threonine 39. Residues aspartate 50, glutamate 116, and 116 to 119 (EGAG) contribute to the ATP site. Mg(2+)-binding residues include aspartate 50 and glutamate 116. 116–119 (EGAG) is a binding site for phosphate. 151–154 (GLIN) contributes to the substrate binding site. Residues asparagine 175 and 175–177 (NLK) each bind ATP.

This sequence belongs to the dethiobiotin synthetase family. In terms of assembly, homodimer. Mg(2+) serves as cofactor.

The protein resides in the cytoplasm. It carries out the reaction (7R,8S)-7,8-diammoniononanoate + CO2 + ATP = (4R,5S)-dethiobiotin + ADP + phosphate + 3 H(+). The protein operates within cofactor biosynthesis; biotin biosynthesis; biotin from 7,8-diaminononanoate: step 1/2. In terms of biological role, catalyzes a mechanistically unusual reaction, the ATP-dependent insertion of CO2 between the N7 and N8 nitrogen atoms of 7,8-diaminopelargonic acid (DAPA, also called 7,8-diammoniononanoate) to form a ureido ring. This chain is ATP-dependent dethiobiotin synthetase BioD, found in Helicobacter pylori (strain ATCC 700392 / 26695) (Campylobacter pylori).